The primary structure comprises 887 residues: Alanine--tRNA ligase (887 aa).

The Zn(2+) site is built by His-581, His-585, Cys-683, and His-687.

Belongs to the class-II aminoacyl-tRNA synthetase family. The cofactor is Zn(2+).

The protein resides in the cytoplasm. The catalysed reaction is tRNA(Ala) + L-alanine + ATP = L-alanyl-tRNA(Ala) + AMP + diphosphate. In terms of biological role, catalyzes the attachment of alanine to tRNA(Ala) in a two-step reaction: alanine is first activated by ATP to form Ala-AMP and then transferred to the acceptor end of tRNA(Ala). Also edits incorrectly charged Ser-tRNA(Ala) and Gly-tRNA(Ala) via its editing domain. The sequence is that of Alanine--tRNA ligase from Ehrlichia ruminantium (strain Gardel).